Here is a 62-residue protein sequence, read N- to C-terminus: Sec-independent protein translocase protein TatAc (62 aa).

The chain crosses the membrane as a helical span at residues 8–28; the sequence is ILVILFVGFLVFGPDKLPALG.

This sequence belongs to the TatA/E family. In terms of assembly, forms a complex with TatC.

It is found in the cell membrane. Part of the twin-arginine translocation (Tat) system that transports large folded proteins containing a characteristic twin-arginine motif in their signal peptide across membranes. TatA could form the protein-conducting channel of the Tat system. This Bacillus subtilis (strain 168) protein is Sec-independent protein translocase protein TatAc.